The following is a 351-amino-acid chain: uncharacterized protein (351 aa).

This is an uncharacterized protein from Gallus gallus (Chicken).